A 312-amino-acid chain; its full sequence is Pyrimidine-specific ribonucleoside hydrolase RihA (312 aa).

His240 is a catalytic residue.

Belongs to the IUNH family. RihA subfamily.

Functionally, hydrolyzes cytidine or uridine to ribose and cytosine or uracil, respectively. This chain is Pyrimidine-specific ribonucleoside hydrolase RihA, found in Citrobacter koseri (strain ATCC BAA-895 / CDC 4225-83 / SGSC4696).